A 517-amino-acid chain; its full sequence is Glycosyltransferase family 92 protein F55C10.4 (517 aa).

The helical transmembrane segment at 9–31 (FLKYFIIFTFFCVTFCFLKLCLG) threads the bilayer. Residues 156–454 (KPVIFCVSPQ…FKCYNESFYH (299 aa)) enclose the GT92 domain.

Belongs to the glycosyltransferase 92 family.

It is found in the membrane. The sequence is that of Glycosyltransferase family 92 protein F55C10.4 from Caenorhabditis elegans.